The primary structure comprises 216 residues: Small ribosomal subunit protein uS3 (216 aa).

Residues 39 to 111 (IYKFFDKLVR…DINLQVSLLK (73 aa)) enclose the KH type-2 domain.

Belongs to the universal ribosomal protein uS3 family. As to quaternary structure, part of the 30S ribosomal subunit. Forms a tight complex with proteins S10 and S14.

Its function is as follows. Binds the lower part of the 30S subunit head. Binds mRNA in the 70S ribosome, positioning it for translation. This chain is Small ribosomal subunit protein uS3, found in Mycoplasmopsis agalactiae (strain NCTC 10123 / CIP 59.7 / PG2) (Mycoplasma agalactiae).